A 175-amino-acid chain; its full sequence is Small ribosomal subunit protein uS5 (175 aa).

A disordered region spans residues 1 to 21 (MAKPERNKKPQQAEERDDGMR). The S5 DRBM domain maps to 20 to 83 (MREKMVAVNR…EEARRKMAKV (64 aa)).

The protein belongs to the universal ribosomal protein uS5 family. As to quaternary structure, part of the 30S ribosomal subunit. Contacts proteins S4 and S8.

In terms of biological role, with S4 and S12 plays an important role in translational accuracy. Its function is as follows. Located at the back of the 30S subunit body where it stabilizes the conformation of the head with respect to the body. In Dechloromonas aromatica (strain RCB), this protein is Small ribosomal subunit protein uS5.